The primary structure comprises 1343 residues: ABC multidrug transporter atrD (1343 aa).

Residues 1-10 (MSPLETNPLS) show a composition bias toward polar residues. The tract at residues 1-67 (MSPLETNPLS…HRPKSSSSNN (67 aa)) is disordered. Residues 20 to 31 (ETSTTEEQASTP) are compositionally biased toward low complexity. Asn-99 carries an N-linked (GlcNAc...) asparagine glycan. Helical transmembrane passes span 114–134 (ILIMVISTICAIAAGAALPLF), 163–183 (YFVYLGIGEFVTVYVSTVGFI), 235–255 (KVGLTLTALATFVTAFIIAYV), and 263–283 (ICSSTIVALVLTMGGGSQFII). Residues 115-403 (LIMVISTICA…VSPNAQAFTN (289 aa)) form the ABC transmembrane type-1 1 domain. Asn-309 carries N-linked (GlcNAc...) asparagine glycosylation. Transmembrane regions (helical) follow at residues 339 to 359 (IVMGFMIGAMFGLMYSNYGLG) and 366 to 386 (FLVDGAVDVGDILTVLMAILI). The ABC transporter 1 domain occupies 438 to 683 (IELRNVKHIY…GGAYRKLVEA (246 aa)). 473 to 480 (GPSGSGKS) is a binding site for ATP. Residue Asn-545 is glycosylated (N-linked (GlcNAc...) asparagine). Helical transmembrane passes span 773 to 793 (MLIGLVFSVLAGGGQPTQAVL) and 820 to 840 (LMFFVVGIIQFITQSTNGAAF). Residues 774 to 1063 (LIGLVFSVLA…VFSFAPDMGK (290 aa)) form the ABC transmembrane type-1 2 domain. The N-linked (GlcNAc...) asparagine glycan is linked to Asn-872. 4 helical membrane passes run 887-907 (HLSGVSGVTLGTILMTSTTLG), 920-942 (LALVCISVVPVLLACGFYRFYML), 1010-1030 (ALVFFCVALGFWYGGTLLGHH), and 1037-1057 (FFVCFSEILFGAQSAGTVFSF). Residue Asn-1083 is glycosylated (N-linked (GlcNAc...) asparagine). The ABC transporter 2 domain occupies 1098–1336 (IEFRNVHFRY…KGRYYELVNL (239 aa)). ATP is bound at residue 1133 to 1140 (GPSGCGKS).

It belongs to the ABC transporter superfamily. ABCB family. Multidrug resistance exporter (TC 3.A.1.201) subfamily.

It localises to the cell membrane. Fenamirol efflux transporter activity is inhibited by the cyclosporin derivative PSC 833, nigericin, reserpine and valinomycin. The effect of reserpine is transiant, while that of the cyclosporin derivative PSC 833, nigericin and valinomycin is proportional to the time of exposure. Cyclohexinmide has inhibitory effect only when applied prior to addition of the fungicide. Pleiotropic ABC efflux transporter involved in the protection of the cells against a wide range of toxic compounds. Confers resistance to the azole fenarimol via efflux transport. May also be involved in the secretion of penicillin. The protein is ABC multidrug transporter atrD of Emericella nidulans (strain FGSC A4 / ATCC 38163 / CBS 112.46 / NRRL 194 / M139) (Aspergillus nidulans).